Reading from the N-terminus, the 397-residue chain is Acetyl-CoA acetyltransferase, cytosolic (397 aa).

M1 bears the N-acetylmethionine mark. The Acyl-thioester intermediate role is filled by C92. N6-acetyllysine is present on K200. Residues R223 and S226 each contribute to the CoA site. Residues K233 and K235 each carry the N6-acetyllysine modification. S252 contacts CoA. Residue C383 is the Proton donor/acceptor of the active site.

Belongs to the thiolase-like superfamily. Thiolase family. Homotetramer.

Its subcellular location is the cytoplasm. It localises to the cytosol. It catalyses the reaction 2 acetyl-CoA = acetoacetyl-CoA + CoA. Its pathway is lipid metabolism; fatty acid metabolism. Functionally, involved in the biosynthetic pathway of cholesterol. This Mus musculus (Mouse) protein is Acetyl-CoA acetyltransferase, cytosolic (Acat2).